The chain runs to 359 residues: Peptide chain release factor 1 (359 aa).

Glutamine 235 is modified (N5-methylglutamine).

Belongs to the prokaryotic/mitochondrial release factor family. Post-translationally, methylated by PrmC. Methylation increases the termination efficiency of RF1.

The protein localises to the cytoplasm. Its function is as follows. Peptide chain release factor 1 directs the termination of translation in response to the peptide chain termination codons UAG and UAA. This Anaplasma marginale (strain Florida) protein is Peptide chain release factor 1.